Here is a 351-residue protein sequence, read N- to C-terminus: Histidinol-phosphate aminotransferase (351 aa).

The residue at position 213 (Lys213) is an N6-(pyridoxal phosphate)lysine.

The protein belongs to the class-II pyridoxal-phosphate-dependent aminotransferase family. Histidinol-phosphate aminotransferase subfamily. Homodimer. Pyridoxal 5'-phosphate serves as cofactor.

The catalysed reaction is L-histidinol phosphate + 2-oxoglutarate = 3-(imidazol-4-yl)-2-oxopropyl phosphate + L-glutamate. It carries out the reaction L-histidine + 2-oxoglutarate = 3-(imidazol-5-yl)pyruvate + L-glutamate. It participates in amino-acid biosynthesis; L-histidine biosynthesis; L-histidine from 5-phospho-alpha-D-ribose 1-diphosphate: step 7/9. The sequence is that of Histidinol-phosphate aminotransferase from Caldanaerobacter subterraneus subsp. tengcongensis (strain DSM 15242 / JCM 11007 / NBRC 100824 / MB4) (Thermoanaerobacter tengcongensis).